The primary structure comprises 445 residues: Sensor protein kinase CarS (445 aa).

Residues 1–24 (MRSIQRRLSVGLFAVLLVVGLVLA) form the signal peptide. Residues 150–170 (FARVQWMGLGAGALALLLVLL) form a helical membrane-spanning segment. The 52-residue stretch at 177 to 228 (RRSLRPLEEVRLQIAQLQQGQRSQLDNQAPEELEPLVEQINHLLAHTEETLK) folds into the HAMP domain. Positions 236 to 438 (NLGHALKTPL…RVSVELPLQK (203 aa)) constitute a Histidine kinase domain. Phosphohistidine; by autocatalysis is present on His239.

It localises to the membrane. It carries out the reaction ATP + protein L-histidine = ADP + protein N-phospho-L-histidine.. Its function is as follows. Member of the two-component regulatory system CarS/CarR that regulates the expression of multiple genes involved in calcium signaling and homeostasis including CarO and CarP. May function as a membrane-associated protein kinase that phosphorylates CarR in response to environmental signals leading to activation of specific gene promoters. In Pseudomonas aeruginosa (strain ATCC 15692 / DSM 22644 / CIP 104116 / JCM 14847 / LMG 12228 / 1C / PRS 101 / PAO1), this protein is Sensor protein kinase CarS (carS).